We begin with the raw amino-acid sequence, 740 residues long: DNA-directed RNA polymerase subunit beta' (740 aa).

Cys-65, Cys-67, Cys-103, and Cys-106 together coordinate Zn(2+). Residues Asp-539, Asp-541, and Asp-543 each contribute to the Mg(2+) site.

This sequence belongs to the RNA polymerase beta' chain family. RpoC1 subfamily. In plastids the minimal PEP RNA polymerase catalytic core is composed of four subunits: alpha, beta, beta', and beta''. When a (nuclear-encoded) sigma factor is associated with the core the holoenzyme is formed, which can initiate transcription. The cofactor is Mg(2+). Requires Zn(2+) as cofactor.

The protein resides in the plastid. Its subcellular location is the chloroplast. It carries out the reaction RNA(n) + a ribonucleoside 5'-triphosphate = RNA(n+1) + diphosphate. Its function is as follows. DNA-dependent RNA polymerase catalyzes the transcription of DNA into RNA using the four ribonucleoside triphosphates as substrates. This chain is DNA-directed RNA polymerase subunit beta', found in Ostreococcus tauri.